We begin with the raw amino-acid sequence, 870 residues long: MYDKNLEKEYYQICEERGYFEIDGNKTIQEKDKNFCIMMPPPNVTGVLHIGHALTFTLQDIMTRYKRMDGYKVLYQPGLDHAGIATQNVVEKQLLTQGIKKEELGREEFIEKVWEWKEQSGGKILDQMRTLGITPAWSRLRFTMDEGLVNAVKKAFVELYDKRLIVRGNYMINWCTHDGALSDIEVEYKENKGKLYHIKYFLKDSDEFLVVATTRPETFFGDTAVMVHPDDERYAKFVDKEVILPISKKAIKIIADKHVEKEFGTGVVKVTPAHDMNDYEVGLRHNLDFISVFDEKGILNEHCLEFQGLERLEAREKIVAKLESLGFIEKIEEYNNQIGYCYRCNNIVEPYISKQWFVKKEIAQESIEKVALGESKFYPNHWINSFNAWMKDLRDWCISRQLWWGHQIPVYYCECSHEWASQHTPKTCPKCQSQNFKQDEDVLDTWFSSGLWAMSTLGWGNENWGKDKIWSEKDLKDFYPNSLLITGFDILFFWVARMMFQSTNVLHQLPFKDIYLHALVKDEQGRKMSKSLGNVIDPNESIKEYSADILRFTLALLAIQGRDIKLSNDKLLQVRNFTNKIYNAKNYLLLNESKFEDLENITLHSELAKYIYAKFQTCVKDVRENLDNYRFNDAANTLYKFFWDDFCDWGIELSKAEKSSVKELGSIFKEALKLLNPFMPFISEYLYHKLSDTELKTSPSIMISKYPKFKEQDKNIEKIFSLLIESIVSIRRAKSLIDLGNSKIEKAYIKFNDKKIKDEIKAYMNFIIMLAKCEQIEFSEEKLPKAICDVSENLEIFITLENVDLSGILTRLENQKNKLEKESFKLNSMLSNEKFIANAPKEVVEQNKEALENLKIQLEKISVELQNLRG.

The 'HIGH' region signature appears at 42–52; that stretch reads PNVTGVLHIGH. Positions 527–531 match the 'KMSKS' region motif; sequence KMSKS. Lysine 530 is a binding site for ATP. Residues 800-870 are a coiled coil; the sequence is LENVDLSGIL…ISVELQNLRG (71 aa).

This sequence belongs to the class-I aminoacyl-tRNA synthetase family. ValS type 1 subfamily. Monomer.

It localises to the cytoplasm. It carries out the reaction tRNA(Val) + L-valine + ATP = L-valyl-tRNA(Val) + AMP + diphosphate. Its function is as follows. Catalyzes the attachment of valine to tRNA(Val). As ValRS can inadvertently accommodate and process structurally similar amino acids such as threonine, to avoid such errors, it has a 'posttransfer' editing activity that hydrolyzes mischarged Thr-tRNA(Val) in a tRNA-dependent manner. This Campylobacter jejuni subsp. jejuni serotype O:2 (strain ATCC 700819 / NCTC 11168) protein is Valine--tRNA ligase.